We begin with the raw amino-acid sequence, 560 residues long: Oxygen-dependent choline dehydrogenase (560 aa).

An FAD-binding site is contributed by 8 to 37 (DYIIIGAGSAGNVLATRLTEDADVSVLLLE). The active-site Proton acceptor is the histidine 475.

Belongs to the GMC oxidoreductase family. FAD serves as cofactor.

The catalysed reaction is choline + A = betaine aldehyde + AH2. The enzyme catalyses betaine aldehyde + NAD(+) + H2O = glycine betaine + NADH + 2 H(+). It functions in the pathway amine and polyamine biosynthesis; betaine biosynthesis via choline pathway; betaine aldehyde from choline (cytochrome c reductase route): step 1/1. Involved in the biosynthesis of the osmoprotectant glycine betaine. Catalyzes the oxidation of choline to betaine aldehyde and betaine aldehyde to glycine betaine at the same rate. In Stenotrophomonas maltophilia (strain K279a), this protein is Oxygen-dependent choline dehydrogenase.